Consider the following 457-residue polypeptide: tRNA modification GTPase MnmE (457 aa).

(6S)-5-formyl-5,6,7,8-tetrahydrofolate contacts are provided by Arg-22, Glu-85, and Arg-124. The 160-residue stretch at 219–378 (GATVVIAGKP…LKEKIYDLVL (160 aa)) folds into the TrmE-type G domain. Asn-229 provides a ligand contact to K(+). GTP is bound by residues 229–234 (NTGKSS), 248–254 (TPVPGTT), 273–276 (DTAG), and 333–336 (NKAD). A Mg(2+)-binding site is contributed by Ser-233. The K(+) site is built by Thr-248, Val-250, and Thr-253. Residue Thr-254 participates in Mg(2+) binding. Lys-457 is a binding site for (6S)-5-formyl-5,6,7,8-tetrahydrofolate.

The protein belongs to the TRAFAC class TrmE-Era-EngA-EngB-Septin-like GTPase superfamily. TrmE GTPase family. Homodimer. Heterotetramer of two MnmE and two MnmG subunits. Requires K(+) as cofactor.

The protein localises to the cytoplasm. Exhibits a very high intrinsic GTPase hydrolysis rate. Involved in the addition of a carboxymethylaminomethyl (cmnm) group at the wobble position (U34) of certain tRNAs, forming tRNA-cmnm(5)s(2)U34. This is tRNA modification GTPase MnmE from Syntrophus aciditrophicus (strain SB).